The sequence spans 308 residues: UDP-N-acetylenolpyruvoylglucosamine reductase (308 aa).

The 164-residue stretch at 22–185 (RVGGPADWLF…TEATFRAEAG (164 aa)) folds into the FAD-binding PCMH-type domain. Arg165 is a catalytic residue. Residues 197–211 (QIARRDSSQPTKERS) are compositionally biased toward basic and acidic residues. Residues 197-228 (QIARRDSSQPTKERSAGSTFRNPAGFSSTGRA) are disordered. A compositionally biased stretch (polar residues) spans 212–226 (AGSTFRNPAGFSSTG). Residue Ser214 is the Proton donor of the active site. The active site involves Glu296.

The protein belongs to the MurB family. Requires FAD as cofactor.

The protein localises to the cytoplasm. It carries out the reaction UDP-N-acetyl-alpha-D-muramate + NADP(+) = UDP-N-acetyl-3-O-(1-carboxyvinyl)-alpha-D-glucosamine + NADPH + H(+). The protein operates within cell wall biogenesis; peptidoglycan biosynthesis. In terms of biological role, cell wall formation. The protein is UDP-N-acetylenolpyruvoylglucosamine reductase of Cereibacter sphaeroides (strain ATCC 17023 / DSM 158 / JCM 6121 / CCUG 31486 / LMG 2827 / NBRC 12203 / NCIMB 8253 / ATH 2.4.1.) (Rhodobacter sphaeroides).